Reading from the N-terminus, the 178-residue chain is MSTIDPIRYPIGTFQAPAQFRAEDVKEWIAAIRELPDALRAAVAGLNDEQLNTPYRDGGWTVAQVVHHLADASMNAFLRTKWGLTEDKPAIKPFEESEWAKTADARSLPIEPSLMLLEGLHVRWATLLESMTEADFQRLICPEGAKQAMPLYVLTALYTWHGKHHTAQIMSLRKRKGW.

Zn(2+) contacts are provided by histidine 68, histidine 161, and histidine 165.

This sequence belongs to the metal hydrolase YfiT family. Homodimer. The cofactor is Zn(2+).

Its subcellular location is the cytoplasm. Functionally, possible metal-dependent hydrolase. This chain is Putative metal-dependent hydrolase GTNG_0529, found in Geobacillus thermodenitrificans (strain NG80-2).